The following is a 192-amino-acid chain: uncharacterized protein (192 aa).

Disordered regions lie at residues 1 to 37 (MASS…PAFP) and 146 to 192 (ARGP…EQNK). Composition is skewed to pro residues over residues 8 to 19 (TPSPAGLPPPSV) and 159 to 180 (APPP…PGWP).

This is an uncharacterized protein from Homo sapiens (Human).